A 427-amino-acid polypeptide reads, in one-letter code: ATP-sensitive inward rectifier potassium channel 12 (427 aa).

The Cytoplasmic portion of the chain corresponds to 1 to 77; that stretch reads MTAASRANPY…LADMFTTCVD (77 aa). Residue cysteine 75 is modified to S-nitrosocysteine. A helical transmembrane segment spans residues 78-104; that stretch reads IRWRYMLLIFSLAFLASWLLFGIIFWV. A 1,2-diacyl-sn-glycero-3-phospho-(1D-myo-inositol-4,5-bisphosphate) is bound by residues arginine 79 and arginine 81. Residues 105–129 lie on the Extracellular side of the membrane; it reads IAVAHGDLEPAEGRGRTPCVLQVHG. Cysteine 123 and cysteine 155 are disulfide-bonded. Residues 130 to 146 constitute an intramembrane region (helical; Pore-forming); it reads FMAAFLFSIETQTTIGY. K(+) contacts are provided by threonine 143, isoleucine 144, glycine 145, and tyrosine 146. The short motif at 143–148 is the Selectivity filter element; the sequence is TIGYGL. The Extracellular portion of the chain corresponds to 147–155; sequence GLRCVTEEC. Residues 156-183 traverse the membrane as a helical segment; that stretch reads PVAVFMVVAQSIVGCIIDSFMIGAIMAK. Positions 183 and 188 each coordinate a 1,2-diacyl-sn-glycero-3-phospho-(1D-myo-inositol-4,5-bisphosphate). The Cytoplasmic segment spans residues 184-427; sequence MGRPKKRAQT…ERPYRRESEI (244 aa). The segment at 387–427 is disordered; the sequence is DEEDEVATDRDGRSPQPEHDFDRLQASSGALERPYRRESEI. The segment covering 393-409 has biased composition (basic and acidic residues); the sequence is ATDRDGRSPQPEHDFDR. Residues 425-427 carry the PDZ-binding motif; that stretch reads SEI.

It belongs to the inward rectifier-type potassium channel (TC 1.A.2.1) family. KCNJ12 subfamily. As to quaternary structure, homotetramer. Forms heteromer with KCNJ4. Can form heteromeric channels with Kir2.6/KCNJ18. Association, via its PDZ-recognition domain, with LIN7A, LIN7B, LIN7C, DLG1, CASK and APBA1 plays a key role in its localization and trafficking. Highest level in cerebellum. Moderately found in kidney, forebrain and skeletal muscle. Not detected in uterus, liver and pancreas.

The protein resides in the membrane. It localises to the cell membrane. Its subcellular location is the sarcolemma. It is found in the T-tubule. It catalyses the reaction K(+)(in) = K(+)(out). With respect to regulation, activated by phosphatidylinositol 4,5-biphosphate (PtdIns(4,5)P2). PtdIns(4,5)P2 binding to the cytoplasmic side of the channel triggers a conformation change leading to channel opening. Inhibited by Ba(2+). Its function is as follows. Inward rectifying potassium channel that probably participates in controlling the resting membrane potential in electrically excitable cells. It probably participates in establishing action potential waveform and excitability of neuronal and muscle tissues. Inward rectifier potassium channels are characterized by a greater tendency to allow potassium to flow into the cell rather than out of it. Their voltage dependence is regulated by the concentration of extracellular potassium; as external potassium is raised, the voltage range of the channel opening shifts to more positive voltages. The inward rectification is mainly due to the blockage of outward current by internal magnesium. The polypeptide is ATP-sensitive inward rectifier potassium channel 12 (Kcnj12) (Rattus norvegicus (Rat)).